Reading from the N-terminus, the 1217-residue chain is MVTPVCNSSTWQPKDSSFLSWPEMFSLDSFRKDRTQHRQRQCKLPPPRLPPMCVNPAPGGTITRASRDLLKEFPQPKNLLNSVIGRALGISHAKDKLVYVHTNGPKKKKVTLHIKWPKSVEVEGYGSKKIDAERQAAAAACQLFKGWGLLGPRNELFDAAKYRVLADRFGSPADSWWRPEPTMPPTSWRQLNPENIRPGGPAGLSRSLGREEEEDEEEELEEGTIDVTEFLSMTQQDSHNPLRDSRGGSFEMTDDDSAIRALTQFPLPKNLLAKVIQIATSSSTAKNLMQFHTVGTKTKLATLTLLWPCPMTFVAKGRRKAEAENKAAALACKKLKSLGLVDRNNEPLTHAMYNLASLRELGETQRRPCTIQVPEPILRKIEAFLSHYPVDSSWISPELRLQSDDILPLGKDSGPLSDPITGKPYMPLSEAEEVRLSQSLLELWRRRGPIWQEAPQLPVDPHRDTILSAIEQHPVVVISGDTGCGKTTRIPQLLLERYVTEGRGARCNVIITQPRRISAVSVAQRVSHELGPSLRRNVGFQVRLESKPPARGGALLFCTVGILLRKLQSNPSLEGVSHVIVDEVHERDVNTDFLLILLKGLQRLNPALRLVLMSATGDNERFSRYFGGCPVIKVPGFMYPVKEHYLEDILAKLGKHQYPHRHRHHESEDECALDLDLVTDLVLHIDARGEPGGILCFLPGWQEIKGVQQRLQEALGMHESKYLILPVHSNIPMMDQKAIFQQPPLGVRKIVLATNIAETSITVNDIVHVVDSGLHKEERYDLKTKVSCLETVWVSRANVIQRRGRAGRCQSGFAYHLFPRSRLEKMVPFQVPEILRTPLENLVLQAKIHMPEKTAVEFLSKAVDSPNIKAVDEAVILLQEIGVLDQREYLTTLGQRLAHISTDPRLAKAIVLAAIFRCLHPLLVVVSCLTRDPFSSSLQNRAEVDKVKALLSHDSGSDHLAFVRAVAGWEEVLRWQDRTSRENYLEENLLYAPSLRFIHGLIKQFSENIYEAFLVGKPSDCTLPSAQCNEYSEEEELVKGVLMAGLYPNLIQVRQGKVTRQGKFKPNSVTYRTKSGNILLHKSTINREATRLRSRWLTYFMAVKSNGSVFVRDSSQVHPLAVLLLTDGDVHIRDDGRRATISLSDSDLLRLEGDSRTVRLLREFRRALGRMVERSLRSELAALPLSVQQEHGQLLALLAELLRGPCGSFDMRKTADD.

Phosphoserine occurs at positions 15 and 29. The DRBM domain occupies 76–144; it reads PKNLLNSVIG…QAAAAACQLF (69 aa). The interval 176 to 223 is disordered; it reads WWRPEPTMPPTSWRQLNPENIRPGGPAGLSRSLGREEEEDEEEELEEG. A compositionally biased stretch (acidic residues) spans 211 to 223; it reads EEEEDEEEELEEG. A phosphoserine mark is found at serine 249 and serine 403. The Helicase ATP-binding domain maps to 467–635; it reads LSAIEQHPVV…FGGCPVIKVP (169 aa). An ATP-binding site is contributed by 480–487; it reads GDTGCGKT. Residues 582–585 carry the DEAH box motif; sequence DEVH. In terms of domain architecture, Helicase C-terminal spans 677-850; sequence LVTDLVLHID…NLVLQAKIHM (174 aa).

This sequence belongs to the DEAD box helicase family. DEAH subfamily. As to quaternary structure, identified in a complex with TFAM and SSBP1. Interacts (via N-terminus) with ZC3HAV1 (via N-terminal domain) in an RNA-independent manner. Found in a complex with GRSF1, DDX28, FASTKD2 and FASTKD5. Phosphorylated on Ser-15. As to expression, expressed in the heart, brain, spleen, lung, liver, skeletal muscle, kidney, and testis. Expression is strongest in the testis and brain, while the lowest levels of expression are found in the spleen and lung.

The protein localises to the cytoplasm. Its subcellular location is the mitochondrion. The protein resides in the mitochondrion matrix. It is found in the mitochondrion nucleoid. It catalyses the reaction ATP + H2O = ADP + phosphate + H(+). Functionally, RNA-dependent helicase. Plays an important role in the assembly of the mitochondrial large ribosomal subunit. Required for optimal function of the zinc-finger antiviral protein ZC3HAV1. Associates with mitochondrial DNA. Involved in nervous system development and differentiation through its involvement in the up-regulation of a number of genes which are required for neurogenesis, including GSC, NCAM1, neurogenin, and NEUROD. The polypeptide is ATP-dependent RNA helicase DHX30 (Dhx30) (Mus musculus (Mouse)).